The following is a 444-amino-acid chain: MQRETVFDLIGVGFGPSNLALAVRLAERSGAHTLAHCFVERQPAFGWHRGMLLDDCRMQISFLKDLVTMRDPKSRYTFINYLFERGRLNEFVNLKNFYPTRVEFHDYLSWVADAFDDRVHYSETVLGIEPVRGDGARIDALRVLSRDAAGHERQRVTRALSVGVGGTPAIPDAFAALGRDRVIHSSSYLTDIDRLVASPDGERRRVAVIGAGQSAAEVFIDLARRFPHVDANLVMRAGALKPADDSPFVNEIFSPEFTDVVYAQPQDARRALLERYRDTNYAVVDRPLIEQIYEMLYLQRIDGTPRHALLANSAIEAAVRTADGRIELTLRDRMSGATRIERFDALVLATGYRRDTHSALLEGLAPHLGDALTRGDVTRDYLLATPEHFAPRIYLQGCCEDSHGRPTRCCRSWRAVRTKSARRSKTGSRPRTMKAWPGPRTKND.

FAD is bound by residues Glu40–His48 and Gln59. A substrate-binding site is contributed by Lys64. Val125 is an FAD binding site. Residues Ala211–Ser214 and Arg236 contribute to the NADP(+) site. Substrate-binding positions include Asn250–Phe253 and Asn280. An NADP(+)-binding site is contributed by Asn280–Ala282. Residue Arg408–Cys410 coordinates FAD. Residues Ser420–Thr432 are compositionally biased toward basic residues. Residues Ser420–Asp444 form a disordered region.

This sequence belongs to the lysine N(6)-hydroxylase/L-ornithine N(5)-oxygenase family. FAD is required as a cofactor.

The enzyme catalyses L-ornithine + NADPH + O2 = N(5)-hydroxy-L-ornithine + NADP(+) + H2O. The protein operates within siderophore biosynthesis; ornibactin biosynthesis. In terms of biological role, catalyzes the conversion of L-ornithine to N(5)-hydroxyornithine, the first step in the biosynthesis of all hydroxamate-containing siderophores, such as ornibactin. The sequence is that of L-ornithine N(5)-monooxygenase from Burkholderia cepacia (Pseudomonas cepacia).